The chain runs to 151 residues: Ribosome maturation factor RimP (151 aa).

Belongs to the RimP family.

The protein localises to the cytoplasm. In terms of biological role, required for maturation of 30S ribosomal subunits. This is Ribosome maturation factor RimP from Caldicellulosiruptor bescii (strain ATCC BAA-1888 / DSM 6725 / KCTC 15123 / Z-1320) (Anaerocellum thermophilum).